Reading from the N-terminus, the 64-residue chain is Prokaryotic ubiquitin-like protein Pup (64 aa).

Basic and acidic residues predominate over residues 1–11 (MAQEQTKRGGG). The tract at residues 1–36 (MAQEQTKRGGGGDDDDVTDLGGPAGQERREKLAEDT) is disordered. The ARC ATPase binding stretch occupies residues 21-58 (GGPAGQERREKLAEDTDDLLDEIDDVLEENAEDFVRAY). The stretch at 24 to 52 (AGQERREKLAEDTDDLLDEIDDVLEENAE) forms a coiled coil. Q64 is modified (deamidated glutamine). Q64 is covalently cross-linked (Isoglutamyl lysine isopeptide (Gln-Lys) (interchain with K-? in acceptor proteins)).

It belongs to the prokaryotic ubiquitin-like protein family. In terms of assembly, strongly interacts with the proteasome-associated ATPase ARC through a hydrophobic interface; the interacting region of Pup lies in its C-terminal half. There is one Pup binding site per ARC hexamer ring. In terms of processing, is modified by deamidation of its C-terminal glutamine to glutamate by the deamidase Dop, a prerequisite to the subsequent pupylation process.

It participates in protein degradation; proteasomal Pup-dependent pathway. Its function is as follows. Protein modifier that is covalently attached to lysine residues of substrate proteins, thereby targeting them for proteasomal degradation. The tagging system is termed pupylation. The chain is Prokaryotic ubiquitin-like protein Pup from Mycobacteroides abscessus (strain ATCC 19977 / DSM 44196 / CCUG 20993 / CIP 104536 / JCM 13569 / NCTC 13031 / TMC 1543 / L948) (Mycobacterium abscessus).